The sequence spans 284 residues: MALPVNKRVPKILFILFVVAFCVYLVPRVAINFFYYPDDKIYGPDPWSAESVEFTAKDGTRLQGWFIPSSTGPADNAIATIIHAHGNAGNMSAHWPLVSWLPERNFNVFMFDYRGFGKSKGTPSQAGLLDDTQSAINVVRHRSDVNPQRLVLFGQSIGGANILAVIGQGDREGIRAVILDSTFASYATIANQMIPGSGYLLDESYSGENYIASVSPIPLLLIHGKADHVIPWQHSEKLYSLAKEPKRLILIPDGEHIDAFSDRHGDVYREQMVNFILSALNPQN.

The helical transmembrane segment at 12-32 threads the bilayer; it reads ILFILFVVAFCVYLVPRVAIN.

It belongs to the serine esterase family.

The protein localises to the membrane. This is an uncharacterized protein from Escherichia coli O157:H7.